A 341-amino-acid chain; its full sequence is Heat-inducible transcription repressor HrcA (341 aa).

It belongs to the HrcA family.

Its function is as follows. Negative regulator of class I heat shock genes (grpE-dnaK-dnaJ and groELS operons). Prevents heat-shock induction of these operons. This is Heat-inducible transcription repressor HrcA from Brevibacillus brevis (strain 47 / JCM 6285 / NBRC 100599).